A 231-amino-acid chain; its full sequence is Flagellar L-ring protein (231 aa).

A signal peptide spans 1 to 18; sequence MNRYVSVLALSGIAVLAG. Cys19 is lipidated: N-palmitoyl cysteine. Residue Cys19 is the site of S-diacylglycerol cysteine attachment.

The protein belongs to the FlgH family. The basal body constitutes a major portion of the flagellar organelle and consists of four rings (L,P,S, and M) mounted on a central rod.

The protein resides in the cell outer membrane. The protein localises to the bacterial flagellum basal body. In terms of biological role, assembles around the rod to form the L-ring and probably protects the motor/basal body from shearing forces during rotation. This chain is Flagellar L-ring protein, found in Pseudomonas fluorescens (strain SBW25).